We begin with the raw amino-acid sequence, 207 residues long: Sodium/potassium-transporting ATPase subunit beta-1-interacting protein 1 (207 aa).

Helical transmembrane passes span 2–22 (GRCD…VAAL), 35–55 (APIL…FGTV), and 62–82 (LILY…IICF). A glycan (N-linked (GlcNAc...) asparagine) is linked at asparagine 100. The helical transmembrane segment at 147 to 167 (VVSSALQVFLALFGFVYACYV) threads the bilayer.

This sequence belongs to the NKAIN family. Interacts with atp1b1 C-terminus.

The protein resides in the cell membrane. The protein is Sodium/potassium-transporting ATPase subunit beta-1-interacting protein 1 (nkain1) of Danio rerio (Zebrafish).